A 444-amino-acid polypeptide reads, in one-letter code: Cobyrinate a,c-diamide synthase (444 aa).

The GATase cobBQ-type domain occupies 250-438; sequence IIAIAQDRAF…PHIHFFGSYK (189 aa). Catalysis depends on cysteine 332, which acts as the Nucleophile.

Belongs to the CobB/CbiA family. Requires Mg(2+) as cofactor.

It catalyses the reaction cob(II)yrinate + 2 L-glutamine + 2 ATP + 2 H2O = cob(II)yrinate a,c diamide + 2 L-glutamate + 2 ADP + 2 phosphate + 2 H(+). It functions in the pathway cofactor biosynthesis; adenosylcobalamin biosynthesis; cob(II)yrinate a,c-diamide from sirohydrochlorin (anaerobic route): step 10/10. In terms of biological role, catalyzes the ATP-dependent amidation of the two carboxylate groups at positions a and c of cobyrinate, using either L-glutamine or ammonia as the nitrogen source. The protein is Cobyrinate a,c-diamide synthase of Fusobacterium nucleatum subsp. nucleatum (strain ATCC 25586 / DSM 15643 / BCRC 10681 / CIP 101130 / JCM 8532 / KCTC 2640 / LMG 13131 / VPI 4355).